The sequence spans 714 residues: Fatty acid oxidation complex subunit alpha (714 aa).

The enoyl-CoA hydratase stretch occupies residues 1–190; the sequence is MDMTSAFTLN…KSGLVDEIVP (190 aa). The 3-hydroxyacyl-CoA dehydrogenase stretch occupies residues 306-714; the sequence is GTLDSIGILG…FWKTSATDRH (409 aa).

In the N-terminal section; belongs to the enoyl-CoA hydratase/isomerase family. This sequence in the central section; belongs to the 3-hydroxyacyl-CoA dehydrogenase family. As to quaternary structure, heterotetramer of two alpha chains (FadJ) and two beta chains (FadI).

Its subcellular location is the cytoplasm. The catalysed reaction is a (3S)-3-hydroxyacyl-CoA = a (2E)-enoyl-CoA + H2O. It catalyses the reaction a 4-saturated-(3S)-3-hydroxyacyl-CoA = a (3E)-enoyl-CoA + H2O. It carries out the reaction a (3S)-3-hydroxyacyl-CoA + NAD(+) = a 3-oxoacyl-CoA + NADH + H(+). The enzyme catalyses (3S)-3-hydroxybutanoyl-CoA = (3R)-3-hydroxybutanoyl-CoA. The protein operates within lipid metabolism; fatty acid beta-oxidation. Functionally, catalyzes the formation of a hydroxyacyl-CoA by addition of water on enoyl-CoA. Also exhibits 3-hydroxyacyl-CoA epimerase and 3-hydroxyacyl-CoA dehydrogenase activities. The protein is Fatty acid oxidation complex subunit alpha of Escherichia fergusonii (strain ATCC 35469 / DSM 13698 / CCUG 18766 / IAM 14443 / JCM 21226 / LMG 7866 / NBRC 102419 / NCTC 12128 / CDC 0568-73).